The following is a 494-amino-acid chain: Aspartyl/glutamyl-tRNA(Asn/Gln) amidotransferase subunit B (494 aa).

This sequence belongs to the GatB/GatE family. GatB subfamily. Heterotrimer of A, B and C subunits.

The catalysed reaction is L-glutamyl-tRNA(Gln) + L-glutamine + ATP + H2O = L-glutaminyl-tRNA(Gln) + L-glutamate + ADP + phosphate + H(+). The enzyme catalyses L-aspartyl-tRNA(Asn) + L-glutamine + ATP + H2O = L-asparaginyl-tRNA(Asn) + L-glutamate + ADP + phosphate + 2 H(+). Allows the formation of correctly charged Asn-tRNA(Asn) or Gln-tRNA(Gln) through the transamidation of misacylated Asp-tRNA(Asn) or Glu-tRNA(Gln) in organisms which lack either or both of asparaginyl-tRNA or glutaminyl-tRNA synthetases. The reaction takes place in the presence of glutamine and ATP through an activated phospho-Asp-tRNA(Asn) or phospho-Glu-tRNA(Gln). The chain is Aspartyl/glutamyl-tRNA(Asn/Gln) amidotransferase subunit B from Rhodopseudomonas palustris (strain HaA2).